We begin with the raw amino-acid sequence, 380 residues long: Tryptophan 2,3-dioxygenase (380 aa).

Substrate-binding positions include 57-61 (FIITH) and Arg-128. His-313 is a binding site for heme. Thr-328 serves as a coordination point for substrate.

It belongs to the tryptophan 2,3-dioxygenase family. As to quaternary structure, homotetramer. Dimer of dimers. The cofactor is heme.

The enzyme catalyses L-tryptophan + O2 = N-formyl-L-kynurenine. Its pathway is amino-acid degradation; L-tryptophan degradation via kynurenine pathway; L-kynurenine from L-tryptophan: step 1/2. It functions in the pathway pigment biosynthesis; ommochrome biosynthesis. Functionally, heme-dependent dioxygenase that catalyzes the oxidative cleavage of the L-tryptophan (L-Trp) pyrrole ring and converts L-tryptophan to N-formyl-L-kynurenine. Catalyzes the oxidative cleavage of the indole moiety. The protein is Tryptophan 2,3-dioxygenase of Drosophila persimilis (Fruit fly).